We begin with the raw amino-acid sequence, 460 residues long: tRNA modification GTPase MnmE (460 aa).

Arg29, Glu91, and Arg131 together coordinate (6S)-5-formyl-5,6,7,8-tetrahydrofolate. The TrmE-type G domain occupies 226-383 (GLRVALVGRP…LVQAVLERCG (158 aa)). Residue Asn236 coordinates K(+). GTP contacts are provided by residues 236-241 (NVGKSS), 255-261 (TDLPGTT), and 280-283 (DTAG). Ser240 lines the Mg(2+) pocket. Residues Thr255, Leu257, and Thr260 each contribute to the K(+) site. Residue Thr261 coordinates Mg(2+). Residue Lys460 participates in (6S)-5-formyl-5,6,7,8-tetrahydrofolate binding.

It belongs to the TRAFAC class TrmE-Era-EngA-EngB-Septin-like GTPase superfamily. TrmE GTPase family. In terms of assembly, homodimer. Heterotetramer of two MnmE and two MnmG subunits. Requires K(+) as cofactor.

The protein resides in the cytoplasm. In terms of biological role, exhibits a very high intrinsic GTPase hydrolysis rate. Involved in the addition of a carboxymethylaminomethyl (cmnm) group at the wobble position (U34) of certain tRNAs, forming tRNA-cmnm(5)s(2)U34. This is tRNA modification GTPase MnmE from Synechococcus sp. (strain WH7803).